Here is a 1044-residue protein sequence, read N- to C-terminus: Carbamoyl phosphate synthase large chain (1044 aa).

The carboxyphosphate synthetic domain stretch occupies residues 1 to 398; it reads MPKREDISKI…ALMKAIASLD (398 aa). R129, R169, G175, G176, R208, L210, E215, G241, V242, H243, Q284, and E296 together coordinate ATP. The ATP-grasp 1 domain maps to 133 to 325; sequence HDFLISIGER…IARIAAKIAV (193 aa). Positions 284, 296, and 298 each coordinate Mg(2+). The Mn(2+) site is built by Q284, E296, and N298. An oligomerization domain region spans residues 399–539; sequence IDLSYRLRLY…YSTYEDEDEL (141 aa). The segment at 540-916 is carbamoyl phosphate synthetic domain; the sequence is PGISGFVAII…AIRKSILRDI (377 aa). Residues 665–854 enclose the ATP-grasp 2 domain; the sequence is SKRLEAMGID…WVELAVSAIM (190 aa). Positions 701, 738, 740, 745, 770, 771, 772, 773, 813, and 825 each coordinate ATP. Q813, E825, and N827 together coordinate Mg(2+). Residues Q813, E825, and N827 each contribute to the Mn(2+) site. Positions 911–1044 constitute an MGS-like domain; it reads SILRDIKSVF…IDYREISSYH (134 aa). Positions 916-1044 are allosteric domain; it reads IKSVFISVRD…IDYREISSYH (129 aa).

The protein belongs to the CarB family. In terms of assembly, composed of two chains; the small (or glutamine) chain promotes the hydrolysis of glutamine to ammonia, which is used by the large (or ammonia) chain to synthesize carbamoyl phosphate. Tetramer of heterodimers (alpha,beta)4. It depends on Mg(2+) as a cofactor. Mn(2+) serves as cofactor.

It catalyses the reaction hydrogencarbonate + L-glutamine + 2 ATP + H2O = carbamoyl phosphate + L-glutamate + 2 ADP + phosphate + 2 H(+). The catalysed reaction is hydrogencarbonate + NH4(+) + 2 ATP = carbamoyl phosphate + 2 ADP + phosphate + 2 H(+). The protein operates within amino-acid biosynthesis; L-arginine biosynthesis; carbamoyl phosphate from bicarbonate: step 1/1. It participates in pyrimidine metabolism; UMP biosynthesis via de novo pathway; (S)-dihydroorotate from bicarbonate: step 1/3. In terms of biological role, large subunit of the glutamine-dependent carbamoyl phosphate synthetase (CPSase). CPSase catalyzes the formation of carbamoyl phosphate from the ammonia moiety of glutamine, carbonate, and phosphate donated by ATP, constituting the first step of 2 biosynthetic pathways, one leading to arginine and/or urea and the other to pyrimidine nucleotides. The large subunit (synthetase) binds the substrates ammonia (free or transferred from glutamine from the small subunit), hydrogencarbonate and ATP and carries out an ATP-coupled ligase reaction, activating hydrogencarbonate by forming carboxy phosphate which reacts with ammonia to form carbamoyl phosphate. The sequence is that of Carbamoyl phosphate synthase large chain from Thermoplasma volcanium (strain ATCC 51530 / DSM 4299 / JCM 9571 / NBRC 15438 / GSS1).